A 496-amino-acid polypeptide reads, in one-letter code: Inosine-5'-monophosphate dehydrogenase (496 aa).

2 consecutive CBS domains span residues 96–152 (VIKD…TKKV) and 156–212 (MTKD…PQAA). Residues D247 and 299–301 (GIG) contribute to the NAD(+) site. K(+) contacts are provided by G301 and G303. S304 is a binding site for IMP. Position 306 (C306) interacts with K(+). The active-site Thioimidate intermediate is the C306. IMP is bound by residues 339–341 (DGG), 362–363 (GS), and 386–390 (YRGMG). Residue R405 is the Proton acceptor of the active site. E423 contacts IMP. Residues E477, S478, and H479 each coordinate K(+).

It belongs to the IMPDH/GMPR family. As to quaternary structure, homotetramer. Requires K(+) as cofactor.

The enzyme catalyses IMP + NAD(+) + H2O = XMP + NADH + H(+). The protein operates within purine metabolism; XMP biosynthesis via de novo pathway; XMP from IMP: step 1/1. With respect to regulation, mycophenolic acid (MPA) is a non-competitive inhibitor that prevents formation of the closed enzyme conformation by binding to the same site as the amobile flap. In contrast, mizoribine monophosphate (MZP) is a competitive inhibitor that induces the closed conformation. MPA is a potent inhibitor of mammalian IMPDHs but a poor inhibitor of the bacterial enzymes. MZP is a more potent inhibitor of bacterial IMPDH. Its function is as follows. Catalyzes the conversion of inosine 5'-phosphate (IMP) to xanthosine 5'-phosphate (XMP), the first committed and rate-limiting step in the de novo synthesis of guanine nucleotides, and therefore plays an important role in the regulation of cell growth. The chain is Inosine-5'-monophosphate dehydrogenase from Methanocaldococcus jannaschii (strain ATCC 43067 / DSM 2661 / JAL-1 / JCM 10045 / NBRC 100440) (Methanococcus jannaschii).